Reading from the N-terminus, the 258-residue chain is uncharacterized protein (258 aa).

Ile-17, Asp-53, Asn-80, Arg-113, Tyr-145, Lys-149, Ile-178, and Ser-180 together coordinate NADP(+). Tyr-145 (proton donor) is an active-site residue. Lys-149 (lowers pKa of active site Tyr) is an active-site residue.

The protein belongs to the short-chain dehydrogenases/reductases (SDR) family.

Its subcellular location is the cytoplasm. It is found in the nucleus. This is an uncharacterized protein from Schizosaccharomyces pombe (strain 972 / ATCC 24843) (Fission yeast).